A 658-amino-acid polypeptide reads, in one-letter code: Threonine--tRNA ligase (658 aa).

Residues 1–64 (MSNTVSLQFP…GASGKLEIIT (64 aa)) form the TGS domain. Residues 246 to 548 (DHRRLGREMD…LIENFAGHMP (303 aa)) are catalytic. Cysteine 343, histidine 394, and histidine 525 together coordinate Zn(2+).

It belongs to the class-II aminoacyl-tRNA synthetase family. Homodimer. Zn(2+) is required as a cofactor.

It is found in the cytoplasm. It catalyses the reaction tRNA(Thr) + L-threonine + ATP = L-threonyl-tRNA(Thr) + AMP + diphosphate + H(+). Functionally, catalyzes the attachment of threonine to tRNA(Thr) in a two-step reaction: L-threonine is first activated by ATP to form Thr-AMP and then transferred to the acceptor end of tRNA(Thr). Also edits incorrectly charged L-seryl-tRNA(Thr). The chain is Threonine--tRNA ligase from Brucella abortus (strain S19).